Consider the following 312-residue polypeptide: Cytoplasmic dynein intermediate light chain DYN3 (312 aa).

This sequence belongs to the dynein light intermediate chain DYN3 family. As to quaternary structure, the dynein complex consists of at least two heavy chains and a number of intermediate and light chains. Interacts with DYN1.

The protein localises to the cytoplasm. It is found in the cytoskeleton. Its function is as follows. Component of the cytoplasmic dynein which acts as a motor for the intracellular retrograde motility of vesicles and organelles along microtubules. May play an important role in the proper orientation of the mitotic spindle into the budding daughter cell yeast. Probably required for normal progression of the cell cycle. The polypeptide is Cytoplasmic dynein intermediate light chain DYN3 (DYN3) (Saccharomyces cerevisiae (strain ATCC 204508 / S288c) (Baker's yeast)).